We begin with the raw amino-acid sequence, 616 residues long: Sulfite reductase [NADPH] hemoprotein beta-component (616 aa).

A compositionally biased stretch (basic and acidic residues) spans 1 to 10; that stretch reads MDDHSPRDAA. Residues 1–35 are disordered; sequence MDDHSPRDAAETPAPGPAATPAKRVYETPPTSRPI. Residues 11–22 are compositionally biased toward low complexity; it reads ETPAPGPAATPA. [4Fe-4S] cluster-binding residues include Cys470, Cys476, Cys515, and Cys519. Cys519 lines the siroheme pocket.

The protein belongs to the nitrite and sulfite reductase 4Fe-4S domain family. Alpha(8)-beta(8). The alpha component is a flavoprotein, the beta component is a hemoprotein. Siroheme is required as a cofactor. It depends on [4Fe-4S] cluster as a cofactor.

It catalyses the reaction hydrogen sulfide + 3 NADP(+) + 3 H2O = sulfite + 3 NADPH + 4 H(+). The protein operates within sulfur metabolism; hydrogen sulfide biosynthesis; hydrogen sulfide from sulfite (NADPH route): step 1/1. In terms of biological role, component of the sulfite reductase complex that catalyzes the 6-electron reduction of sulfite to sulfide. This is one of several activities required for the biosynthesis of L-cysteine from sulfate. The protein is Sulfite reductase [NADPH] hemoprotein beta-component of Methylobacterium radiotolerans (strain ATCC 27329 / DSM 1819 / JCM 2831 / NBRC 15690 / NCIMB 10815 / 0-1).